Here is a 227-residue protein sequence, read N- to C-terminus: Cytochrome c oxidase subunit 2 (227 aa).

The Mitochondrial intermembrane segment spans residues 1–14; it reads MPYPLQLGFQDATS. The chain crosses the membrane as a helical span at residues 15-45; that stretch reads PIMEELLHFHDHTLMIVFLISSLVLYIITLM. At 46–59 the chain is on the mitochondrial matrix side; the sequence is LTTKLTHTSTMDAQ. The chain crosses the membrane as a helical span at residues 60 to 87; sequence EVETVWTILPAVILILIALPSLRILYMM. The Mitochondrial intermembrane segment spans residues 88-227; sequence DEINNPLLTI…HFEDWSTSML (140 aa). Residues His161, Cys196, Glu198, Cys200, His204, and Met207 each contribute to the Cu cation site. Glu198 serves as a coordination point for Mg(2+).

The protein belongs to the cytochrome c oxidase subunit 2 family. Component of the cytochrome c oxidase (complex IV, CIV), a multisubunit enzyme composed of 14 subunits. The complex is composed of a catalytic core of 3 subunits MT-CO1, MT-CO2 and MT-CO3, encoded in the mitochondrial DNA, and 11 supernumerary subunits COX4I, COX5A, COX5B, COX6A, COX6B, COX6C, COX7A, COX7B, COX7C, COX8 and NDUFA4, which are encoded in the nuclear genome. The complex exists as a monomer or a dimer and forms supercomplexes (SCs) in the inner mitochondrial membrane with NADH-ubiquinone oxidoreductase (complex I, CI) and ubiquinol-cytochrome c oxidoreductase (cytochrome b-c1 complex, complex III, CIII), resulting in different assemblies (supercomplex SCI(1)III(2)IV(1) and megacomplex MCI(2)III(2)IV(2)). Found in a complex with TMEM177, COA6, COX18, COX20, SCO1 and SCO2. Interacts with TMEM177 in a COX20-dependent manner. Interacts with COX20. Interacts with COX16. Requires Cu cation as cofactor.

The protein localises to the mitochondrion inner membrane. It carries out the reaction 4 Fe(II)-[cytochrome c] + O2 + 8 H(+)(in) = 4 Fe(III)-[cytochrome c] + 2 H2O + 4 H(+)(out). Component of the cytochrome c oxidase, the last enzyme in the mitochondrial electron transport chain which drives oxidative phosphorylation. The respiratory chain contains 3 multisubunit complexes succinate dehydrogenase (complex II, CII), ubiquinol-cytochrome c oxidoreductase (cytochrome b-c1 complex, complex III, CIII) and cytochrome c oxidase (complex IV, CIV), that cooperate to transfer electrons derived from NADH and succinate to molecular oxygen, creating an electrochemical gradient over the inner membrane that drives transmembrane transport and the ATP synthase. Cytochrome c oxidase is the component of the respiratory chain that catalyzes the reduction of oxygen to water. Electrons originating from reduced cytochrome c in the intermembrane space (IMS) are transferred via the dinuclear copper A center (CU(A)) of subunit 2 and heme A of subunit 1 to the active site in subunit 1, a binuclear center (BNC) formed by heme A3 and copper B (CU(B)). The BNC reduces molecular oxygen to 2 water molecules using 4 electrons from cytochrome c in the IMS and 4 protons from the mitochondrial matrix. The sequence is that of Cytochrome c oxidase subunit 2 (MT-CO2) from Dasypus novemcinctus (Nine-banded armadillo).